The chain runs to 602 residues: Elongation factor 4 (602 aa).

Positions 5 to 187 constitute a tr-type G domain; the sequence is DHIRNFSIIA…ALVKRIPAPK (183 aa). GTP is bound by residues 17–22 and 134–137; these read DHGKST and NKID.

It belongs to the TRAFAC class translation factor GTPase superfamily. Classic translation factor GTPase family. LepA subfamily.

The protein localises to the cell inner membrane. The enzyme catalyses GTP + H2O = GDP + phosphate + H(+). Its function is as follows. Required for accurate and efficient protein synthesis under certain stress conditions. May act as a fidelity factor of the translation reaction, by catalyzing a one-codon backward translocation of tRNAs on improperly translocated ribosomes. Back-translocation proceeds from a post-translocation (POST) complex to a pre-translocation (PRE) complex, thus giving elongation factor G a second chance to translocate the tRNAs correctly. Binds to ribosomes in a GTP-dependent manner. The sequence is that of Elongation factor 4 from Zymomonas mobilis subsp. mobilis (strain ATCC 31821 / ZM4 / CP4).